The sequence spans 290 residues: 33 kDa chaperonin (290 aa).

2 disulfides stabilise this stretch: C235–C237 and C268–C271.

This sequence belongs to the HSP33 family. Under oxidizing conditions two disulfide bonds are formed involving the reactive cysteines. Under reducing conditions zinc is bound to the reactive cysteines and the protein is inactive.

It localises to the cytoplasm. Redox regulated molecular chaperone. Protects both thermally unfolding and oxidatively damaged proteins from irreversible aggregation. Plays an important role in the bacterial defense system toward oxidative stress. In Streptococcus pyogenes serotype M28 (strain MGAS6180), this protein is 33 kDa chaperonin.